Reading from the N-terminus, the 147-residue chain is MSMSTSTEVIAHHWAFAIFLIVAIGLCCLMLVGGWFLGGRARARSKNVPFESGIDSVGSARLRLSAKFYLVAMFFVIFDVEALYLFAWSTSIRESGWVGFVEAAIFIFVLLAGLVYLVRIGALDWTPARSRRERMNPETNSIANRQR.

3 helical membrane-spanning segments follow: residues 16-36 (FAIF…GGWF), 68-88 (FYLV…LFAW), and 98-118 (VGFV…VYLV).

It belongs to the complex I subunit 3 family. NDH-1 is composed of 13 different subunits. Subunits NuoA, H, J, K, L, M, N constitute the membrane sector of the complex.

The protein resides in the cell inner membrane. It catalyses the reaction a quinone + NADH + 5 H(+)(in) = a quinol + NAD(+) + 4 H(+)(out). Its function is as follows. NDH-1 shuttles electrons from NADH, via FMN and iron-sulfur (Fe-S) centers, to quinones in the respiratory chain. The immediate electron acceptor for the enzyme in this species is believed to be ubiquinone. Couples the redox reaction to proton translocation (for every two electrons transferred, four hydrogen ions are translocated across the cytoplasmic membrane), and thus conserves the redox energy in a proton gradient. The chain is NADH-quinone oxidoreductase subunit A from Shigella boydii serotype 18 (strain CDC 3083-94 / BS512).